The sequence spans 496 residues: O-acetyltransferase cpsE (496 aa).

Polar residues predominate over residues 203–217 (IGTQGQLPDGVQSSD). The segment at 203-228 (IGTQGQLPDGVQSSDDPTDGAGDIFE) is disordered.

It belongs to the fumigaclavine B O-acetyltransferase family.

It carries out the reaction campesine A + acetyl-CoA = campesine C + CoA. Its pathway is alkaloid biosynthesis. Its function is as follows. O-acetyltransferase; part of the gene cluster that mediates the biosynthesis of campesine G, a dimeric indole piperazine alkaloid that shows good insecticidal activity Galleria mellonella. Within the pathway, cpsE acetylates N13 of campesine A to produce campesine C. CpsE produces an inseparable mixture of two acyl-atropisomers due to the spontaneous rotation of an acyl group at N13 of piperazine ring. The non-canonical non-ribosomal peptide synthetase cpsA catalyzes the first steps of the pathway by producing L-tryptophanal and L-valinal from their respective amino-acids. These products condensate spontaneously to form trypyl-valyl pyrazine also known as didehydrocampesine A. The NmrA-like family domain-containing oxidoreductase cpsB is the next enzyme in cps pathway and reduces the unstable didehydrocampesine A to campesine A. The methyltransferase cpsF and the acetyltransferase cpsE both recognize N13 of piperazine ring to carry out methylation and acetylation of campesine A to produce campesine C and B, respectively. The cytochrome P450 monooxygenase cpsD then acts as a dimerase that catalyzes oxidative heterocoupling between campesine B and C to produce heterodimers with unexpected 6/5/6/6/6/6/5/6 eight-ring scaffold called campesine D. Finally,the cytochrome P450 monooxygenase cpsC is a regioselective dehydrogenase that catalyzes dehydrogenation reaction towards C2-N1 to produce campesine G. In Aspergillus campestris (strain IBT 28561), this protein is O-acetyltransferase cpsE.